Here is a 156-residue protein sequence, read N- to C-terminus: MPRRREVAKRVILPDPKYNDRTVAKFINAIMLMGKKSTAEGIVYGAFDLIAERSGEEALDVFKKAVENIRPMLEVKSRRVGGSTYQVPVEVRADRRNALAIRWLILYARGRGEKTMVERLAGELLDAAANRGAAVKKREDTHRMAEANKAFAHYRW.

Belongs to the universal ribosomal protein uS7 family. Part of the 30S ribosomal subunit. Contacts proteins S9 and S11.

In terms of biological role, one of the primary rRNA binding proteins, it binds directly to 16S rRNA where it nucleates assembly of the head domain of the 30S subunit. Is located at the subunit interface close to the decoding center, probably blocks exit of the E-site tRNA. The protein is Small ribosomal subunit protein uS7 of Syntrophotalea carbinolica (strain DSM 2380 / NBRC 103641 / GraBd1) (Pelobacter carbinolicus).